The chain runs to 426 residues: MERISTNQLYNSGIPVTVPSPLPAIPATLDENIPRIPDGQNVPRERELRSTPMPPHQNQSTVAPLHGHFQSSTGSVGPLRSSQAIRFSSVSSNEQYTNANPYNSQPPSSGSSSTLNYGSQYGGFEPSLTDFPRDAGPTWCPDPVDGLLGYTDDVPAGNNLTENSSIAAGDELAKQSEWWNDFMNYDWKDIDNTACTETQPQVGPAAQSSVAVHQSAAQQSVSSQSGEPSAVAIPSPSGASNTSNSKTRMRWTPELHERFVDAVNLLGGSEKATPKGVLKLMKADNLTIYHVKSHLQKYRTARYRPELSEGSSEKKAASKEDIPSIDLKGGNFDLTEALRLQLELQKRLHEQLEIQRSLQLRIEEQGKCLQMMLEQQCIPGTDKAVDASTSAEGTKPSSDLPESSAVKDVPENSQNGIAKQTESGDR.

Disordered regions lie at residues 27-81 (ATLD…PLRS), 96-123 (YTNA…QYGG), and 198-247 (TQPQ…NSKT). A compositionally biased stretch (polar residues) spans 69–81 (FQSSTGSVGPLRS). 2 stretches are compositionally biased toward low complexity: residues 102 to 119 (YNSQ…NYGS) and 205 to 225 (AAQS…SSQS). The segment covering 237–246 (SGASNTSNSK) has biased composition (polar residues). Residues 243–303 (SNSKTRMRWT…HLQKYRTARY (61 aa)) form the HTH myb-type domain. Residues 274-299 (PKGVLKLMKADNLTIYHVKSHLQKYR) constitute a DNA-binding region (H-T-H motif). 2 disordered regions span residues 302 to 326 (RYRP…PSID) and 382 to 426 (DKAV…SGDR). Basic and acidic residues predominate over residues 303–322 (YRPELSEGSSEKKAASKEDI). Polar residues-rich tracts occupy residues 387–401 (ASTS…SDLP) and 411–426 (ENSQ…SGDR).

As to quaternary structure, interacts (via C-terminus) with SPX4 (via N-terminus) in the presence of inositol polyphosphate. Interacts (via C-terminus) with SPX1 and SPX2 (via SPX domain). Interacts with RLI1 in the nucleus.

The protein localises to the nucleus. Its subcellular location is the cytoplasm. In terms of biological role, transcription factor involved in phosphate starvation signaling. Binds to P1BS, an imperfect palindromic sequence 5'-GNATATNC-3', to promote the expression of inorganic phosphate (Pi) starvation-responsive genes. Functionally redundant with PHR1 and PHR3 in regulating Pi starvation response and Pi homeostasis. Involved in both systematic and local Pi-signaling pathways. Regulates several Pi transporters. PHR2 binding to DNA is repressed redundantly by SPX1, SPX2 and SPX4 in a PI-dependent manner. The DNA-binding activity is also repressed by SPX4. Involved in root growth under Pi deprivation. Involved in the modulation of Pi response and homeostasis together with RLI1; promotes RLI1 expression in response to nitrate availability, thus triggering the nitrate-induced phosphate response (NIPR). This Oryza sativa subsp. indica (Rice) protein is Protein PHOSPHATE STARVATION RESPONSE 2.